The chain runs to 196 residues: MADS-box transcription factor 32 (196 aa).

Positions 1–61 (MGRGRSEIKR…GKLYHFLSPT (61 aa)) constitute an MADS-box domain. The 91-residue stretch at 85–175 (RQERRAELEK…CDKIAHAQTL (91 aa)) folds into the K-box domain.

It localises to the nucleus. In terms of biological role, probable transcription factor. This is MADS-box transcription factor 32 (MADS32) from Oryza sativa subsp. japonica (Rice).